Here is a 293-residue protein sequence, read N- to C-terminus: N-acetylmannosamine kinase (293 aa).

ATP is bound by residues 5-12 (AIDIGGTK) and 133-140 (GVGGGLVI). Zn(2+) is bound by residues His-157, Cys-167, Cys-169, and Cys-174.

Belongs to the ROK (NagC/XylR) family. NanK subfamily. Homodimer.

The catalysed reaction is an N-acyl-D-mannosamine + ATP = an N-acyl-D-mannosamine 6-phosphate + ADP + H(+). It participates in amino-sugar metabolism; N-acetylneuraminate degradation; D-fructose 6-phosphate from N-acetylneuraminate: step 2/5. Functionally, catalyzes the phosphorylation of N-acetylmannosamine (ManNAc) to ManNAc-6-P. The sequence is that of N-acetylmannosamine kinase from Vibrio vulnificus (strain YJ016).